The chain runs to 90 residues: Acylphosphatase (90 aa).

Residues 3 to 90 (RVLIKLTGKV…DIYLDFSIVR (88 aa)) form the Acylphosphatase-like domain. Residues arginine 18 and asparagine 36 contribute to the active site.

It belongs to the acylphosphatase family.

The enzyme catalyses an acyl phosphate + H2O = a carboxylate + phosphate + H(+). The polypeptide is Acylphosphatase (acyP) (Shewanella oneidensis (strain ATCC 700550 / JCM 31522 / CIP 106686 / LMG 19005 / NCIMB 14063 / MR-1)).